Consider the following 533-residue polypeptide: Beta-apo-4'-carotenal oxygenase (533 aa).

Active-site residues include Glu226 and Cys260.

It belongs to the aldehyde dehydrogenase family.

It carries out the reaction 4'-apo-beta-carotenal + NAD(+) + H2O = neurosporaxanthin + NADH + 2 H(+). Beta-apo-4'-carotenal oxygenase involved in the last step of synthesis of neurosporaxanthin, a carboxylic apocarotenoid acting as an essential protective pigment and leading to orange pigmentation. Converts the aldehyde beta-apo-4'-carotenal into neurosporaxanthin. Neurosporaxanthin is synthesized from geranyl-geranyl pyrophosphate (GGPP) through several enzymatic activities. Phytoene synthase activity performed by the bifunctional enzyme al-2 first produces phytoene from geranyl-geranyl pyrophosphate (GGPP). The phytoene dehydrogenase al-1 then introduces 5 desaturations to lead to 3,4-didehydrolycopene via the intermediates phytofluene, zeta-carotene, neurosporene and lycopene. Al-2 cyclase activity then converts 3,4-didehydrolycopene into torulene. Al-2 can also convet lycopene into gamma-carotene which in turn is converted to beta-carotene by an additional al-2 cyclization reaction. Torulene is the substrate of the dioxidase cao-2 that breaks the molecule, removing five carbon atoms to yield beta-apo-4'-carotenal, whereas the aldehyde dehydrogenase ylo-1 mediates the last step by converting beta-apo-4'-carotenal into neurosporaxanthin. This Neurospora crassa (strain ATCC 24698 / 74-OR23-1A / CBS 708.71 / DSM 1257 / FGSC 987) protein is Beta-apo-4'-carotenal oxygenase.